We begin with the raw amino-acid sequence, 570 residues long: Dual specificity testis-specific protein kinase 2 (570 aa).

The region spanning Asp-58–Met-313 is the Protein kinase domain. Residues Ile-64–Val-72 and Lys-87 each bind ATP. The Proton acceptor role is filled by Asp-176. Phosphoserine; by autocatalysis is present on Ser-219. Phosphoserine is present on residues Ser-369, Ser-456, and Ser-460. The segment at Asp-513–Gly-570 is disordered. Over residues Ser-558–Gly-570 the composition is skewed to polar residues.

This sequence belongs to the protein kinase superfamily. TKL Ser/Thr protein kinase family. The cofactor is Mg(2+). Mn(2+) is required as a cofactor. As to expression, predominantly expressed in testis and prostate. Found predominantly in non-germinal Sertoli cells.

The protein resides in the nucleus. It catalyses the reaction L-seryl-[protein] + ATP = O-phospho-L-seryl-[protein] + ADP + H(+). The enzyme catalyses L-threonyl-[protein] + ATP = O-phospho-L-threonyl-[protein] + ADP + H(+). It carries out the reaction L-tyrosyl-[protein] + ATP = O-phospho-L-tyrosyl-[protein] + ADP + H(+). Its activity is regulated as follows. Activated by autophosphorylation on Ser-219. Dual specificity protein kinase activity catalyzing autophosphorylation and phosphorylation of exogenous substrates on both serine/threonine and tyrosine residues. Phosphorylates cofilin at 'Ser-3'. May play an important role in spermatogenesis. This is Dual specificity testis-specific protein kinase 2 (Tesk2) from Rattus norvegicus (Rat).